A 247-amino-acid polypeptide reads, in one-letter code: Small ribosomal subunit protein uS3 (247 aa).

One can recognise a KH type-2 domain in the interval 39 to 111; the sequence is IYDFFDKKVR…NISIQVIELK (73 aa). Positions 221-247 are disordered; sequence EEMDLLNAPKDRRVRRGGERHASTKKN. A compositionally biased stretch (basic and acidic residues) spans 236–247; that stretch reads RGGERHASTKKN.

It belongs to the universal ribosomal protein uS3 family. As to quaternary structure, part of the 30S ribosomal subunit. Forms a tight complex with proteins S10 and S14.

Binds the lower part of the 30S subunit head. Binds mRNA in the 70S ribosome, positioning it for translation. This is Small ribosomal subunit protein uS3 from Metamycoplasma arthritidis (strain 158L3-1) (Mycoplasma arthritidis).